Here is a 349-residue protein sequence, read N- to C-terminus: Signal peptidase I (349 aa).

Transmembrane regions (helical) follow at residues 3–23 (NLFF…LDYF) and 25–45 (LPNT…VLWC). At 46-80 (YHRFVVLPKRHRQVARAEQRSGKTLSEEEKAKIEP) the chain is on the cytoplasmic side. A helical membrane pass occupies residues 81-101 (ISEASEFLSSLFPVLAVVFLV). At 102-349 (RSFLFEPFQI…RFERFFTAIK (248 aa)) the chain is on the periplasmic side. Catalysis depends on residues Ser115 and Lys196.

This sequence belongs to the peptidase S26 family.

Its subcellular location is the cell inner membrane. The enzyme catalyses Cleavage of hydrophobic, N-terminal signal or leader sequences from secreted and periplasmic proteins.. This chain is Signal peptidase I (lepB), found in Haemophilus influenzae (strain ATCC 51907 / DSM 11121 / KW20 / Rd).